Reading from the N-terminus, the 1160-residue chain is MPDLIQTKSVVLGYGVKMVLAPAKAARSLLIREEAVWRFSLPRVLSTPTTMLETTEPIAHASELDKPSIVVTNTEVDSEDNTSSVLGRYIPQKCLQNARLAAVNSCVNEIFEARFRERPDAPAVCAWDGSYTYRELNDRSSALAHKLRRRGVQAEVLVALLFEKSKFSVVAMHAVIKAGGAFQLWDPSLPVARLGGMFAESKAHLVLASAANARLAAEISENVMVVDESLVPPWESAPLNPGTQPENALYCVFTSGSTGKPKGFLMDHRAFCTCALGVGELLGLNGASRLIQFSANSFDLATFDHILPFLCGACLCIPSEEERKGDLTRAFNRYRATHAVLTPTVSRLLEPEKLTTLQVLLLAGEAPSREDIRRWASTVGLLNGYSPAEAGCITIVNPSLQESHPSKIGFPVSVVPWVVDPDDCNRLVPAGEVGELVLQGHTLARGYFGRPDQSKAAFIPTPAWVRQFGYETYGRLYRTGDLVRFDAEDESLVYIGRKDSQVKIRGQRLELGEVEHALQQFFPRPQIVVVELLTAEDREPALVGFVYQPGSSQHMPAPPQHQDNSLFLVADDQFCADAQKALASLRDILPPYMIPSDLLRISHLPMVPSGKTDRRLIRMRAVDLAPEERRKYSSVLGQSRDQPVTQLEESLLGLWATCLKLPPSQIGVLDNFFHLGGGSLEAIHLAAEARNMGFAELSSAAVFQCPTIREMAGMLDGVTASVQEQDPRGCTSFQLESSLVAELLRKSQCTLEDLQEGFLPLTPFQEKTAKMKPMHLLLDIPGIDHSRLEAAWALVLEKHISFRSIYVEHQGRVYQAFLRQPDTVSIPIRWCDEPVHECAARFCEQDVDLILDGRPWWSMTRINNKIDSVLVLRLTHAQWDALTLDVLFKDFMAAYESRELSRRDLEFPAYMRFRLRHNASPATVRFWSTFLHGSRLTQPLLLDGAAEVDPGNEAMVFVSQQIPMLTPPHGITLGSVFRAAWAFVLARYTGQEDVVFGEFVEGRSLLVKSVEKVTGCAAAETPMRIVVSPTASVRDLLKHSQEQYVARIPYETCELEDIVPSSTSWPTDTTFNHILVIQHEPVLPPVALDGRPCPHRWAFHGRLEDVYVQMVFGPDTLHVGMSGPEIRLSRTIATQLVEKLASTITQFNDRPEALLSEITV.

An adenylation region spans residues 132–520 (TYRELNDRSS…LGEVEHALQQ (389 aa)). Residues 642–719 (QPVTQLEESL…EMAGMLDGVT (78 aa)) enclose the Carrier domain. Serine 679 is modified (O-(pantetheine 4'-phosphoryl)serine). Positions 749–1025 (CTLEDLQEGF…CAAAETPMRI (277 aa)) are condensation.

Belongs to the NRP synthetase family. Interacts with the mitogen-activated protein kinase mpkA. Post-translationally, phosphorylated by mpkA during conidiogenesis.

The protein localises to the cytoplasm. It participates in alkaloid biosynthesis. In terms of biological role, nonribosomal peptide synthetase; part of the gene cluster that mediates the biosynthesis of the antitumor fumiquinazolines that confer a dual-usage capability to defend against phagocytes in the environment and animal hosts. The simplest member is fumiquinazoline F (FQF) with a 6-6-6 tricyclic core derived from anthranilic acid (Ant), tryptophan (Trp), and alanine (Ala). The trimodular NRPS fmqA is responsible for FQF formation. Modules 1, 2 and 3 of fmqA are predicted to activate and load Ant, Trp and Ala, respectively, providing for the assembly of an Ant-Trp-Ala-S-enzyme intermediate that would undergo double cyclization for chain release and generation of the tricyclic 6-6-6 product fumiquinazoline F. The presence of an E domain predicted for module 2 of fmqA is consistent with epimerization of L-Trp to D-Trp during assembly to generate the R-stereocenter at C14 of FQF. The FAD-dependent monooxygenase fmqB and the monomodular NRPS fmqC then maturate FQF to FQA. FmqB oxidizes the 2',3'-double bond of the indole side chain of FQF, and fmqC activates L-Ala as the adenylate, installs it as the pantetheinyl thioester on its carrier protein domain, and acylates the oxidized indole for subsequent intramolecular cyclization to create the 6-5-5-imidazolindolone of FQA. The FAD-linked oxidoreductase fmqD introduces a third layer of scaffold complexity by converting FQA to the spirohemiaminal FQC, presumably by catalyzing the formation of a transient imine within the pyrazinone ring. FQC subsequently converts nonenzymatically to the known cyclic aminal FQD. This chain is Nonribosomal peptide synthetase fmqC, found in Aspergillus fumigatus (strain ATCC MYA-4609 / CBS 101355 / FGSC A1100 / Af293) (Neosartorya fumigata).